Here is a 629-residue protein sequence, read N- to C-terminus: Ionotropic receptor 75a (629 aa).

Over 1 to 335 (MQLVQLANFV…GDVFLQPFSP (335 aa)) the chain is Extracellular. Residues Asn61, Asn112, Asn126, Asn144, Asn166, and Asn232 are each glycosylated (N-linked (GlcNAc...) asparagine). A helical transmembrane segment spans residues 336-356 (LVWYLFGGVLSLIGVLLWITF). Residues 357 to 374 (YMECKRMQKRWRLDYLPS) are Cytoplasmic-facing. Residues 375-395 (LLSTFLISFGAACIQSSSLIP) traverse the membrane as a helical segment. Over 396-402 (RSAGGRL) the chain is Extracellular. A helical transmembrane segment spans residues 403-423 (IYFALFLISFIMYNYYTSVVV). The Cytoplasmic segment spans residues 424–592 (SSLLSSPVKS…NFVITVGMEY (169 aa)). Residues 593–613 (VAPLLLMLICADILVVVILLV) traverse the membrane as a helical segment. Residues 614–629 (ELAWKRFFTRPLTIHP) are Extracellular-facing.

Belongs to the glutamate-gated ion channel (TC 1.A.10.1) family. In terms of tissue distribution, expressed in neurons in the antennal coeloconic 2 (ac2) sensillum class of sensory hairs (at protein level).

The protein localises to the cell membrane. It localises to the cell projection. It is found in the dendrite. Its function is as follows. Olfactory receptor for propionic, butyric and 2-oxopentanoic acids. This is Ionotropic receptor 75a from Drosophila sechellia (Fruit fly).